The chain runs to 275 residues: Rhamnulose-1-phosphate aldolase (275 aa).

Residue E117 is part of the active site. Zn(2+) contacts are provided by H141, H143, and H212.

This sequence belongs to the aldolase class II family. RhaD subfamily. Homotetramer. Zn(2+) serves as cofactor.

The protein localises to the cytoplasm. It carries out the reaction L-rhamnulose 1-phosphate = (S)-lactaldehyde + dihydroxyacetone phosphate. It participates in carbohydrate degradation; L-rhamnose degradation; glycerone phosphate from L-rhamnose: step 3/3. Its function is as follows. Catalyzes the reversible cleavage of L-rhamnulose-1-phosphate to dihydroxyacetone phosphate (DHAP) and L-lactaldehyde. This is Rhamnulose-1-phosphate aldolase from Salmonella paratyphi C (strain RKS4594).